The following is a 1484-amino-acid chain: Chromosome partition protein MukB (1484 aa).

34–41 (GGNGAGKS) contributes to the ATP binding site. Coiled-coil stretches lie at residues 338 to 415 (NLVQ…RAIQ), 496 to 604 (QTAR…ALAW), 781 to 805 (AARESRLENLSAERDVLAERYATLS), 835 to 868 (EAEMRTLNGRRGELERELSDHHGQNQQSRQHYDQ), 903 to 1115 (HDAQ…SAKA), and 1206 to 1265 (DDPV…LQAV). A flexible hinge region spans residues 666 to 783 (PGGTDDARLT…AVPLFGRAAR (118 aa)).

It belongs to the SMC family. MukB subfamily. Homodimerization via its hinge domain. Binds to DNA via its C-terminal region. Interacts, and probably forms a ternary complex, with MukE and MukF via its C-terminal region. The complex formation is stimulated by calcium or magnesium. Interacts with tubulin-related protein FtsZ.

The protein localises to the cytoplasm. Its subcellular location is the nucleoid. Its function is as follows. Plays a central role in chromosome condensation, segregation and cell cycle progression. Functions as a homodimer, which is essential for chromosome partition. Involved in negative DNA supercoiling in vivo, and by this means organize and compact chromosomes. May achieve or facilitate chromosome segregation by condensation DNA from both sides of a centrally located replisome during cell division. The protein is Chromosome partition protein MukB of Sodalis glossinidius (strain morsitans).